The sequence spans 380 residues: Alcohol dehydrogenase-like 4 (380 aa).

Residues cysteine 47, threonine 49, histidine 70, cysteine 100, cysteine 103, cysteine 106, cysteine 114, and cysteine 180 each contribute to the Zn(2+) site. Threonine 49 and histidine 70 together coordinate an alcohol. Threonine 49 is an NAD(+) binding site. NAD(+) is bound by residues 205–210 (GLGAVG), aspartate 229, lysine 234, 298–300 (LGV), phenylalanine 325, and arginine 375.

It belongs to the zinc-containing alcohol dehydrogenase family. Class-III subfamily. As to quaternary structure, homodimer. Zn(2+) is required as a cofactor.

The protein localises to the cytoplasm. The catalysed reaction is a primary alcohol + NAD(+) = an aldehyde + NADH + H(+). The enzyme catalyses a secondary alcohol + NAD(+) = a ketone + NADH + H(+). This is Alcohol dehydrogenase-like 4 from Arabidopsis thaliana (Mouse-ear cress).